A 405-amino-acid polypeptide reads, in one-letter code: Acetylornithine/succinyldiaminopimelate aminotransferase (405 aa).

Residues 108–109 (GT) and F141 contribute to the pyridoxal 5'-phosphate site. N(2)-acetyl-L-ornithine is bound at residue R144. 226 to 229 (DEVQ) provides a ligand contact to pyridoxal 5'-phosphate. K255 is modified (N6-(pyridoxal phosphate)lysine). S283 provides a ligand contact to N(2)-acetyl-L-ornithine. T284 lines the pyridoxal 5'-phosphate pocket.

It belongs to the class-III pyridoxal-phosphate-dependent aminotransferase family. ArgD subfamily. As to quaternary structure, homodimer. Requires pyridoxal 5'-phosphate as cofactor.

It is found in the cytoplasm. The enzyme catalyses N(2)-acetyl-L-ornithine + 2-oxoglutarate = N-acetyl-L-glutamate 5-semialdehyde + L-glutamate. The catalysed reaction is N-succinyl-(2S,6S)-2,6-diaminopimelate + 2-oxoglutarate = (S)-2-succinylamino-6-oxoheptanedioate + L-glutamate. The protein operates within amino-acid biosynthesis; L-arginine biosynthesis; N(2)-acetyl-L-ornithine from L-glutamate: step 4/4. It participates in amino-acid biosynthesis; L-lysine biosynthesis via DAP pathway; LL-2,6-diaminopimelate from (S)-tetrahydrodipicolinate (succinylase route): step 2/3. Functionally, involved in both the arginine and lysine biosynthetic pathways. In Salmonella typhi, this protein is Acetylornithine/succinyldiaminopimelate aminotransferase.